Here is a 136-residue protein sequence, read N- to C-terminus: Large ribosomal subunit protein bL21 (136 aa).

The segment at Arg-107–Glu-136 is disordered. Residues Ala-121 to Glu-136 show a composition bias toward low complexity.

It belongs to the bacterial ribosomal protein bL21 family. As to quaternary structure, part of the 50S ribosomal subunit. Contacts protein L20.

In terms of biological role, this protein binds to 23S rRNA in the presence of protein L20. This chain is Large ribosomal subunit protein bL21, found in Acidothermus cellulolyticus (strain ATCC 43068 / DSM 8971 / 11B).